A 938-amino-acid chain; its full sequence is Respiratory burst oxidase homolog protein C (938 aa).

The tract at residues 1–63 is disordered; the sequence is MQNSENHHPH…DIGTSAGAGA (63 aa). Residues 1 to 369 are Cytoplasmic-facing; sequence MQNSENHHPH…MYFLLDNWQR (369 aa). Positions 115–141 form a coiled coil; the sequence is ASLVRNASSRIRQVSQELKRLASLNKR. 2 EF-hand-like regions span residues 185–195 and 222–233; these read TAPTTGLLPRA and RNITTDSINKAQ. EF-hand domains follow at residues 245-280 and 289-324; these read SFDT…SASA and QSDE…APNQ. Residues aspartate 258, aspartate 260, aspartate 262, arginine 264, and glutamate 269 each coordinate Ca(2+). Residues 370 to 390 traverse the membrane as a helical segment; the sequence is VWVLLLWIGIMAVLFTWKYIQ. At 391 to 402 the chain is on the extracellular side; it reads YKQKAAYDVMGP. A helical membrane pass occupies residues 403–423; sequence CVCLAKGAAETIKLNMAIILL. In terms of domain architecture, Ferric oxidoreductase spans 408–565; it reads KGAAETIKLN…LFIIVYTLLI (158 aa). Residues 424–454 are Cytoplasmic-facing; the sequence is PVCRNTITWLRNKTRLGSAVPFDDNLNFHKV. Residues 455 to 475 form a helical membrane-spanning segment; that stretch reads IAVAIALGVAIHGLAHLTCDF. At 476–509 the chain is on the extracellular side; the sequence is PKLLNASEEAYEPMIYYFGEQPESYWWFVRGVEG. A helical transmembrane segment spans residues 510–530; the sequence is VTGIIMVVLMAIAFTLATPWF. The Cytoplasmic portion of the chain corresponds to 531–545; it reads RRGRVSFPKPFHKLT. A helical transmembrane segment spans residues 546–566; that stretch reads GFNAFWYSHHLFIIVYTLLIV. The Extracellular segment spans residues 567–580; it reads HGEKLYITKDWYKR. Residues 581–599 form a helical membrane-spanning segment; it reads STWMYLTVPLVLYAGERLL. The region spanning 599-727 is the FAD-binding FR-type domain; the sequence is LRAFRSSIKA…DGPYGAPAQD (129 aa). The Cytoplasmic portion of the chain corresponds to 600–732; the sequence is RAFRSSIKAV…APAQDYKQYE (133 aa). Residues 733 to 753 form a helical membrane-spanning segment; that stretch reads VVLLVGLGIGATPMISIVKDI. Residues 754–938 are Extracellular-facing; the sequence is VNNMKAMDEE…TKFDFHKENF (185 aa). Residues 762–796 are disordered; the sequence is EEENSLENGNGMSNAAQNASPNMAQKRGKSSSASG. Positions 767-784 are enriched in polar residues; sequence LENGNGMSNAAQNASPNM.

The protein belongs to the RBOH (TC 5.B.1.3) family. As to quaternary structure, monomer and homodimer. Phosphorylated by CPK. As to expression, expressed in leaves.

It is found in the membrane. Functionally, calcium-dependent NADPH oxidase that generates superoxide. May be responsible for the oxidative burst in response to pathogen attack in the leaves. The protein is Respiratory burst oxidase homolog protein C (RBOHC) of Solanum tuberosum (Potato).